The sequence spans 188 residues: Large ribosomal subunit protein bL35m (188 aa).

It belongs to the bacterial ribosomal protein bL35 family. Component of the mitochondrial large ribosomal subunit (mt-LSU). Mature mammalian 55S mitochondrial ribosomes consist of a small (28S) and a large (39S) subunit. The 28S small subunit contains a 12S ribosomal RNA (12S mt-rRNA) and 30 different proteins. The 39S large subunit contains a 16S rRNA (16S mt-rRNA), a copy of mitochondrial valine transfer RNA (mt-tRNA(Val)), which plays an integral structural role, and 52 different proteins.

The protein localises to the mitochondrion. This Homo sapiens (Human) protein is Large ribosomal subunit protein bL35m (MRPL35).